The following is a 1010-amino-acid chain: 2-oxoglutarate dehydrogenase-like, mitochondrial (1010 aa).

A mitochondrion-targeting transit peptide spans 1-107; that stretch reads MSQLRLLLFR…RASVSSCTKT (107 aa). Residues 28–47 are disordered; sequence GGRRRSSGPPTTIPRSRGGV. Ca(2+) is bound by residues His130, Asp143, and Asp145. Thiamine diphosphate is bound by residues Arg299, Asp398, Asn431, Ile433, and Gln663. Residues Asp398, Asn431, and Ile433 each coordinate Mg(2+).

It belongs to the alpha-ketoglutarate dehydrogenase family. As to quaternary structure, the OGDHC complex comprises multiple copies of three catalytic enzyme components, the 2-oxoglutarate dehydrogenase (OGDH/E1), the dihydrolipoamide dehydrogenase (DLST/E2) and the dihydrolipoamide dehydrogenase (DLD/E3). OGDHL/E1-like isoenzyme may replace OGDH in the OGDHC complex in the brain. The presence of either ODGH/E1 or ODGHL/E1-like isoenzyme in the complex may depend on its tissular distribution. The cofactor is thiamine diphosphate. Mg(2+) serves as cofactor. The OGDHL-containing OGDHC complex is present in the brain, but not in the heart.

The protein localises to the mitochondrion matrix. The enzyme catalyses N(6)-[(R)-lipoyl]-L-lysyl-[protein] + 2-oxoglutarate + H(+) = N(6)-[(R)-S(8)-succinyldihydrolipoyl]-L-lysyl-[protein] + CO2. Its function is as follows. 2-oxoglutarate dehydrogenase (E1-like) component of the 2-oxoglutarate dehydrogenase multienzyme complex (OGDHC) which mediates the decarboxylation of alpha-ketoglutarate in the tricarboxylic acid cycle. The OGDHC complex catalyzes the overall conversion of 2-oxoglutarate to succinyl-CoA and CO(2) while reducing NAD(+) to NADH. The OGDHC complex is mainly active in the mitochondrion. Involved in the inhibition of cell proliferation and in apoptosis. This is 2-oxoglutarate dehydrogenase-like, mitochondrial from Rattus norvegicus (Rat).